The chain runs to 34 residues: Photosystem II reaction center protein Psb30 (34 aa).

Residues 6-26 (VIGQLTSLAMIVLVGPAVIVV) form a helical membrane-spanning segment.

The protein belongs to the Psb30/Ycf12 family. In terms of assembly, PSII is composed of 1 copy each of membrane proteins PsbA, PsbB, PsbC, PsbD, PsbE, PsbF, PsbH, PsbI, PsbJ, PsbK, PsbL, PsbM, PsbT, PsbX, PsbY, PsbZ, Psb30/Ycf12, peripheral proteins of the oxygen-evolving complex and a large number of cofactors. It forms dimeric complexes.

It is found in the plastid. The protein resides in the chloroplast thylakoid membrane. In terms of biological role, a core subunit of photosystem II (PSII), probably helps stabilize the reaction center. This is Photosystem II reaction center protein Psb30 from Gracilaria tenuistipitata var. liui (Red alga).